A 122-amino-acid polypeptide reads, in one-letter code: UPF0102 protein VCM66_0538 (122 aa).

Belongs to the UPF0102 family.

In Vibrio cholerae serotype O1 (strain M66-2), this protein is UPF0102 protein VCM66_0538.